The primary structure comprises 508 residues: Photosystem II CP47 reaction center protein (508 aa).

6 helical membrane-spanning segments follow: residues S21–S36, I101–W115, G140–F156, I203–S218, V237–V252, and S457–R472.

Belongs to the PsbB/PsbC family. PsbB subfamily. As to quaternary structure, PSII is composed of 1 copy each of membrane proteins PsbA, PsbB, PsbC, PsbD, PsbE, PsbF, PsbH, PsbI, PsbJ, PsbK, PsbL, PsbM, PsbT, PsbX, PsbY, PsbZ, Psb30/Ycf12, at least 3 peripheral proteins of the oxygen-evolving complex and a large number of cofactors. It forms dimeric complexes. Binds multiple chlorophylls. PSII binds additional chlorophylls, carotenoids and specific lipids. serves as cofactor.

The protein resides in the plastid. The protein localises to the chloroplast thylakoid membrane. Its function is as follows. One of the components of the core complex of photosystem II (PSII). It binds chlorophyll and helps catalyze the primary light-induced photochemical processes of PSII. PSII is a light-driven water:plastoquinone oxidoreductase, using light energy to abstract electrons from H(2)O, generating O(2) and a proton gradient subsequently used for ATP formation. In Barbarea verna (Land cress), this protein is Photosystem II CP47 reaction center protein.